Here is a 456-residue protein sequence, read N- to C-terminus: Serine/threonine-protein kinase meng-po (456 aa).

Residues 15–78 (RSFGDGGSTN…RSSIYKKPDK (64 aa)) are disordered. A compositionally biased stretch (low complexity) spans 22–55 (STNSRNSNNNSSTCTNHNNQKRCSTPLTPTSTST). A Protein kinase domain is found at 101 to 367 (YNIEKTLAEG…VAKYMKDRWV (267 aa)). Residues 107 to 115 (LAEGCFAKI) and Lys-130 contribute to the ATP site. Asp-221 functions as the Proton acceptor in the catalytic mechanism. The residue at position 334 (Ser-334) is a Phosphoserine; by PKA.

It belongs to the protein kinase superfamily. Ser/Thr protein kinase family. Mg(2+) serves as cofactor. As to expression, expressed in the mushroom bodies (at protein level).

The catalysed reaction is L-seryl-[protein] + ATP = O-phospho-L-seryl-[protein] + ADP + H(+). It catalyses the reaction L-threonyl-[protein] + ATP = O-phospho-L-threonyl-[protein] + ADP + H(+). Activated by Pka-C1-mediated phosphorylation of Ser-334. Functionally, serine/threonine-protein kinase involved in memory formation. Together with the cAMP-dependent protein kinase A Pka-C1, promotes long-term memory (LTM) by regulating CrebB stability and activity. Involved in the maintenance of anesthesia-sensitive memory (ASM) which includes short-term memory (STM) and middle-term memory (MTM). The protein is Serine/threonine-protein kinase meng-po of Drosophila melanogaster (Fruit fly).